An 846-amino-acid chain; its full sequence is Outer membrane channel protein CpnT (846 aa).

Residues 1-443 (MAPLAVDPAA…AGVRGLKERL (443 aa)) form an NTD region. Residues 442-630 (RLEPTTPHLE…SGSEPPGLHA (189 aa)) form a disordered region. 2 stretches are compositionally biased toward pro residues: residues 450–466 (LEPP…PPRI) and 475–504 (APAP…PPVD). Low complexity-rich tracts occupy residues 508–517 (EPVAPSSASA) and 562–586 (APAT…HSTP). Residues 651-846 (RLSDEAVDPQ…ELIRRGVLRQ (196 aa)) form a TNT region. The TNT domain maps to 751 to 846 (YGPQLDRIGG…ELIRRGVLRQ (96 aa)). The active site involves Arg757. Residue Arg780 participates in NAD(+) binding. Residue Gln822 is part of the active site.

Interacts with the immunity factor for TNT (IFT) homolog. The C-terminal domain (TNT) is probably cleaved.

It localises to the cell outer membrane. It is found in the secreted. The protein localises to the cell surface. It catalyses the reaction NAD(+) + H2O = ADP-D-ribose + nicotinamide + H(+). With respect to regulation, glycohydrolase activity is completely inhibited by interaction with the immunity factor for TNT (IFT) homolog. This inhibition protects M.bovis from self-poisoning. The N-terminal domain (NTD) forms an outer membrane channel and is used for uptake of nutrients across the outer membrane. Also confers susceptibility to structurally different antibiotics and antituberculosis drugs, and to toxic immune factors such as nitric oxide (NO). The C-terminal domain (TNT) is dispensable for normal growth in macrophages. The protein is Outer membrane channel protein CpnT of Mycobacterium bovis (strain BCG / Pasteur 1173P2).